Consider the following 119-residue polypeptide: Beta-2-microglobulin (119 aa).

The signal sequence occupies residues Met-1–Ala-20. The region spanning Pro-25–Lys-114 is the Ig-like C1-type domain. Cys-45 and Cys-100 form a disulfide bridge.

The protein belongs to the beta-2-microglobulin family. In terms of assembly, heterodimer of an alpha chain and a beta chain. Beta-2-microglobulin is the beta-chain of major histocompatibility complex class I molecules.

The protein resides in the secreted. In terms of biological role, component of the class I major histocompatibility complex (MHC). Involved in the presentation of peptide antigens to the immune system. The sequence is that of Beta-2-microglobulin (B2M) from Chlorocebus aethiops (Green monkey).